A 327-amino-acid polypeptide reads, in one-letter code: Eukaryotic translation initiation factor 3 subunit I (327 aa).

5 WD repeats span residues Gly-8 to Asp-49, His-51 to Thr-89, Val-188 to Gln-227, Lys-229 to Glu-268, and Gly-285 to Thr-324.

It belongs to the eIF-3 subunit I family. As to quaternary structure, component of the eukaryotic translation initiation factor 3 (eIF-3) complex.

Its subcellular location is the cytoplasm. Its function is as follows. Component of the eukaryotic translation initiation factor 3 (eIF-3) complex, which is involved in protein synthesis of a specialized repertoire of mRNAs and, together with other initiation factors, stimulates binding of mRNA and methionyl-tRNAi to the 40S ribosome. The eIF-3 complex specifically targets and initiates translation of a subset of mRNAs involved in cell proliferation. The chain is Eukaryotic translation initiation factor 3 subunit I from Caenorhabditis briggsae.